The chain runs to 731 residues: MSADVSTTPAAENVNGAAEASPAPAAAAPSATTPEVTAVENSTPAPAANQPHSASLYVGELDPSVTEAMLYELFSSIGQVASIRVCRDAVTRRSLGYAYVNYNNTADGERALEDLNYTLIKGKPCRIMWSQRDPALRKTGQGNVFIKNLDSAIDNKALHDTFAAFGNILSCKVAQDEFGNSKGYGFVHYETAEAANNAIKHVNGMLLNDKKVFVGHHISKKDRQSKFEEMKANFTNVYIKNLDSEIDDDEFRKMFEKFGEITSATLSRDQEGKSRGFGFVNFSTHESAQAAVEEMNDKEIRSQKLYVGRAQKKHEREEELRKQYEAARLEKASKYQGVNLYVKNLTDDIDDEKLRELFGPYGTITSAKVMRDTNVERDQSPDSAGKEKEADKENDKEATPEAEKAEKAEEKPSESSEEKDKEAKKSDKKPFGKSKGFGFVCFSSPDEASKAVTEMNQRMVNGKPLYVALAQRKDVRRSQLEASIQARNTIRQQQAAAAAGMPQPYMQPAVFYGPGQQGFIPGGQRGMAFPPQPGMVMGIPGGRPGQYPGPFPGQQGGRGMGPNQQIPPNFAQGIPMGMQGPGGIPNGMGYPQMAQVQFGRGAGGRGQVPGMPMGQGMRGGPGYGQGRGAPVQQGQMRPGQGGRGQNAAAPAGPQEGAAGGVNAQTLGAAPPAQQKQMLGEALYPKIQAQQPELAGKITGMLLEMDNTELLSLTRKPCAPRSMRPLAFTMST.

The segment covering 1-10 has biased composition (polar residues); it reads MSADVSTTPA. A disordered region spans residues 1–51; the sequence is MSADVSTTPAAENVNGAAEASPAPAAAAPSATTPEVTAVENSTPAPAANQP. The segment covering 17–39 has biased composition (low complexity); the sequence is AAEASPAPAAAAPSATTPEVTAV. RRM domains follow at residues 54–132, 142–219, 235–312, and 338–472; these read ASLY…WSQR, GNVF…HHIS, TNVY…RAQK, and VNLY…LAQR. Disordered regions lie at residues 369 to 429 and 603 to 665; these read VMRD…SDKK and GGRG…NAQT. The span at 616-627 shows a compositional bias: gly residues; that stretch reads GMRGGPGYGQGR. The segment covering 645 to 656 has biased composition (low complexity); sequence QNAAAPAGPQEG. Positions 658–731 constitute a PABC domain; that stretch reads AGGVNAQTLG…MRPLAFTMST (74 aa).

Belongs to the polyadenylate-binding protein type-1 family.

The protein localises to the cytoplasm. The protein resides in the nucleus. Its function is as follows. Binds the poly(A) tail of mRNA. Appears to be an important mediator of the multiple roles of the poly(A) tail in mRNA biogenesis, stability and translation. In the nucleus, involved in both mRNA cleavage and polyadenylation. Is also required for efficient mRNA export to the cytoplasm. Acts in concert with a poly(A)-specific nuclease (PAN) to affect poly(A) tail shortening, which may occur concomitantly with either nucleocytoplasmic mRNA transport or translational initiation. In the cytoplasm, stimulates translation initiation and regulates mRNA decay through translation termination-coupled poly(A) shortening, probably mediated by PAN. This Aspergillus niger (strain ATCC MYA-4892 / CBS 513.88 / FGSC A1513) protein is Polyadenylate-binding protein, cytoplasmic and nuclear (pab1).